The chain runs to 540 residues: Serine/threonine-protein phosphatase ppzA (540 aa).

2 disordered regions span residues 1 to 108 and 120 to 140; these read MGQS…KRGH and VDHVSDVPPTGAAPTGPSTQK. Composition is skewed to polar residues over residues 15–24 and 45–54; these read SLQSYPSFSR and SDSPRGSTAG. Residues 62-88 are compositionally biased toward low complexity; it reads AASVKSTTSRRSSTNQSVQSPDDTPSQ. Pro residues predominate over residues 89-98; that stretch reads PDAPEPPPSP. Low complexity predominate over residues 127-136; it reads PPTGAAPTGP. Positions 239, 241, 267, and 299 each coordinate Mn(2+). The Phosphatase tensin-type domain occupies 258 to 540; the sequence is PASNYLFLGD…SLVTSWGISR (283 aa). H300 (proton donor) is an active-site residue. Mn(2+) is bound by residues H348 and H423.

It belongs to the PPP phosphatase family. PP-Z subfamily. Interacts with at least 54 proteins, of which 31 are detected only after iron starvation and 22 are detected only in control conditions. Only the regulatory subunit of the protein phosphatase PP1 (Afu1g04800/AFUB_005140) interacts with ppzA in both conditions. Requires Mn(2+) as cofactor.

Its subcellular location is the cytoplasm. The enzyme catalyses O-phospho-L-seryl-[protein] + H2O = L-seryl-[protein] + phosphate. The catalysed reaction is O-phospho-L-threonyl-[protein] + H2O = L-threonyl-[protein] + phosphate. In terms of biological role, catalytic subunit of protein phosphatase Z (PPZ) involved in iron assimilation. Regulates secondary metabolites production, including gliotoxin, pyripyropene A, fumagillin, fumiquinazoline A, triacetyl-fusarinine C, and helvolic acid. Plays a key role in pathogenicity. The polypeptide is Serine/threonine-protein phosphatase ppzA (Aspergillus fumigatus (strain CBS 144.89 / FGSC A1163 / CEA10) (Neosartorya fumigata)).